The chain runs to 246 residues: Bis(5'-nucleosyl)-tetraphosphatase PrpE [asymmetrical] (246 aa).

Belongs to the PrpE family. Ni(2+) is required as a cofactor.

The enzyme catalyses P(1),P(4)-bis(5'-guanosyl) tetraphosphate + H2O = GMP + GTP + 2 H(+). Asymmetrically hydrolyzes Ap4p to yield AMP and ATP. This chain is Bis(5'-nucleosyl)-tetraphosphatase PrpE [asymmetrical], found in Bacillus cereus (strain Q1).